The chain runs to 264 residues: 3-methyl-2-oxobutanoate hydroxymethyltransferase (264 aa).

Residues Asp45 and Asp84 each contribute to the Mg(2+) site. 3-methyl-2-oxobutanoate-binding positions include Asp45–Ser46, Asp84, and Lys112. Glu114 lines the Mg(2+) pocket. Glu181 functions as the Proton acceptor in the catalytic mechanism.

It belongs to the PanB family. Homodecamer; pentamer of dimers. Mg(2+) is required as a cofactor.

It localises to the cytoplasm. It carries out the reaction 3-methyl-2-oxobutanoate + (6R)-5,10-methylene-5,6,7,8-tetrahydrofolate + H2O = 2-dehydropantoate + (6S)-5,6,7,8-tetrahydrofolate. The protein operates within cofactor biosynthesis; (R)-pantothenate biosynthesis; (R)-pantoate from 3-methyl-2-oxobutanoate: step 1/2. In terms of biological role, catalyzes the reversible reaction in which hydroxymethyl group from 5,10-methylenetetrahydrofolate is transferred onto alpha-ketoisovalerate to form ketopantoate. This is 3-methyl-2-oxobutanoate hydroxymethyltransferase from Photobacterium profundum (strain SS9).